The sequence spans 574 residues: Sulfate adenylyltransferase (574 aa).

The N-terminal stretch occupies residues 1–170; the sequence is MANAPHGGVL…VQAVSKPAYY (170 aa). Residues 171-395 form a catalytic region; sequence DYVALRYTPA…LRESYPPKAK (225 aa). Gln-198 provides a ligand contact to sulfate. ATP-binding positions include 198–201 and 292–295; these read QTRN and GRDH. Active-site residues include Thr-199, Arg-200, and Asn-201. Arg-200 is a binding site for sulfate. Ala-296 contributes to the sulfate binding site. Residue Met-334 coordinates ATP. The allosteric regulation domain; adenylyl-sulfate kinase-like stretch occupies residues 396–574; it reads QGFTLFLTGL…ILLLEAQSLI (179 aa). 3'-phosphoadenylyl sulfate is bound by residues 435–438, Arg-452, 478–479, and Lys-519; these read ETVR and IA.

It in the N-terminal section; belongs to the sulfate adenylyltransferase family. The protein in the C-terminal section; belongs to the APS kinase family. Homohexamer. Dimer of trimers.

Its subcellular location is the cytoplasm. The enzyme catalyses sulfate + ATP + H(+) = adenosine 5'-phosphosulfate + diphosphate. It participates in sulfur metabolism; hydrogen sulfide biosynthesis; sulfite from sulfate: step 1/3. Its activity is regulated as follows. Allosterically inhibited by 3'-phosphoadenosine 5'-phosphosulfate (PAPS). Functionally, catalyzes the first intracellular reaction of sulfate assimilation, forming adenosine-5'-phosphosulfate (APS) from inorganic sulfate and ATP. Plays an important role in sulfate activation as a component of the biosynthesis pathway of sulfur-containing amino acids. The chain is Sulfate adenylyltransferase from Mycosarcoma maydis (Corn smut fungus).